The primary structure comprises 263 residues: NADH dehydrogenase [ubiquinone] iron-sulfur protein 3, mitochondrial (263 aa).

Residues 1 to 35 (MVAAVARLWWRGLLGASALTRGAGRPSVLLLPVRR) constitute a mitochondrion transit peptide.

This sequence belongs to the complex I 30 kDa subunit family. In terms of assembly, core subunit of respiratory chain NADH dehydrogenase (Complex I) which is composed of 45 different subunits. Interacts with NDUFAF3. Interacts with RAB5IF. Found in subcomplexes containing subunits NDUFS2, MT-ND1 and NDUFA13.

It localises to the mitochondrion inner membrane. The catalysed reaction is a ubiquinone + NADH + 5 H(+)(in) = a ubiquinol + NAD(+) + 4 H(+)(out). Functionally, core subunit of the mitochondrial membrane respiratory chain NADH dehydrogenase (Complex I) which catalyzes electron transfer from NADH through the respiratory chain, using ubiquinone as an electron acceptor. Essential for the catalytic activity and assembly of complex I. In Gorilla gorilla gorilla (Western lowland gorilla), this protein is NADH dehydrogenase [ubiquinone] iron-sulfur protein 3, mitochondrial (NDUFS3).